The following is a 397-amino-acid chain: Mannonate dehydratase 2 (397 aa).

This sequence belongs to the mannonate dehydratase family. Requires Fe(2+) as cofactor. Mn(2+) serves as cofactor.

It carries out the reaction D-mannonate = 2-dehydro-3-deoxy-D-gluconate + H2O. It functions in the pathway carbohydrate metabolism; pentose and glucuronate interconversion. Its function is as follows. Catalyzes the dehydration of D-mannonate. The sequence is that of Mannonate dehydratase 2 (uxuA2) from Agrobacterium fabrum (strain C58 / ATCC 33970) (Agrobacterium tumefaciens (strain C58)).